The sequence spans 1154 residues: Caspase recruitment domain-containing protein 11 (1154 aa).

The CARD domain occupies 18–110 (EEDALWENVE…ELYKLVTGKE (93 aa)). The interval 111–128 (PTRRFSTIVVEEGHEGLT) is linker. Residues 130 to 449 (FLMNEVIKLQ…KDSNNLDQSL (320 aa)) are a coiled coil. Residues serine 448 and serine 466 each carry the phosphoserine modification. Positions 450-666 (PRNLPVTIIS…GHVRGPGPSV (217 aa)) are inhibitory domain (ID). A disordered region spans residues 460 to 626 (QDFGDASPRT…HSSSSSHQSE (167 aa)). Residues 473 to 484 (EADDSSTSEESP) are compositionally biased toward acidic residues. Serine 512 is modified (phosphoserine). Over residues 518–529 (RTSDFQAKGHEE) the composition is skewed to basic and acidic residues. A compositionally biased stretch (polar residues) spans 534–562 (ASPSSCGSLPITNSFTKMQPPRSRSSIMS). Serine 535 bears the Phosphoserine mark. Serine 559 carries the phosphoserine; by PKC/PRKCB and PKC/PRKCQ modification. Basic and acidic residues predominate over residues 573-587 (IVRRYKEDAPHRSTV). Serine 593 carries the post-translational modification Phosphoserine. Low complexity predominate over residues 614-625 (SSIHSSSSSHQS). A phosphoserine; by PKC/PRKCB and PKC/PRKCQ mark is found at serine 644 and serine 652. Residues 667–755 (QHTTLNGDSL…PVTLHYKVNH (89 aa)) form the PDZ domain. Phosphoserine is present on residues serine 886 and serine 925. One can recognise a Guanylate kinase-like domain in the interval 973-1140 (RRRPVLFTPT…LLRVVKDKIG (168 aa)).

Homodimer; disulfide-linked. Homomultimer; polymerizes following activation, forming a nucleating helical template that seeds BCL10-filament formation via a CARD-CARD interaction. Interacts (via CARD domain) with BCL10 (via CARD domain); interaction takes place following CARD11 activation and polymerization, leading to the formation of a filamentous CBM complex assembly. Component of a CBM complex (CARD11-BCL10-MALT1) complex involved in NF-kappa-B activation. Found in a membrane raft complex, at least composed of BCL10, CARD11, DPP4 and IKBKB. Interacts (via PDZ domain) with DPP4 (via cytoplasmic tail). Post-translationally, phosphorylation at Ser-559, Ser-644 and Ser-652 by PRKCB and PRKCQ leads to a shift from an inactive to an active form that activates the NF-kappa-B signaling. Detected in adult peripheral blood leukocytes, thymus, spleen and liver. Also found in promyelocytic leukemia HL-60 cells, chronic myelogenous leukemia K-562 cells, Burkitt's lymphoma Raji cells and colorectal adenocarcinoma SW480 cells. Not detected in HeLaS3, MOLT-4, A-549 and G431 cells.

It is found in the cytoplasm. Its subcellular location is the membrane raft. Maintained in an autoinhibited state via homodimerization in which the CARD domain forms an extensive interaction with the adjacent linker and coiled-coil regions. Activation downstream of T-cell receptor (TCR) by phosphorylation by PRKCB and PRKCQ triggers CARD11 homooligomerization and BCL10 recruitment, followed by activation of NF-kappa-B. Functionally, adapter protein that plays a key role in adaptive immune response by transducing the activation of NF-kappa-B downstream of T-cell receptor (TCR) and B-cell receptor (BCR) engagement. Transduces signals downstream TCR or BCR activation via the formation of a multiprotein complex together with BCL10 and MALT1 that induces NF-kappa-B and MAP kinase p38 (MAPK11, MAPK12, MAPK13 and/or MAPK14) pathways. Upon activation in response to TCR or BCR triggering, CARD11 homooligomerizes to form a nucleating helical template that recruits BCL10 via CARD-CARD interaction, thereby promoting polymerization of BCL10 and subsequent recruitment of MALT1: this leads to I-kappa-B kinase (IKK) phosphorylation and degradation, and release of NF-kappa-B proteins for nuclear translocation. Its binding to DPP4 induces T-cell proliferation and NF-kappa-B activation in a T-cell receptor/CD3-dependent manner. Promotes linear ubiquitination of BCL10 by promoting the targeting of BCL10 to RNF31/HOIP. Stimulates the phosphorylation of BCL10. Also activates the TORC1 signaling pathway. The protein is Caspase recruitment domain-containing protein 11 of Homo sapiens (Human).